Consider the following 693-residue polypeptide: Polyphosphate kinase (693 aa).

An ATP-binding site is contributed by Asn-57. Residues Arg-383 and Arg-413 each contribute to the Mg(2+) site. The active-site Phosphohistidine intermediate is His-443. Residues Tyr-476, Arg-572, and His-601 each coordinate ATP.

The protein belongs to the polyphosphate kinase 1 (PPK1) family. The cofactor is Mg(2+). In terms of processing, an intermediate of this reaction is the autophosphorylated ppk in which a phosphate is covalently linked to a histidine residue through a N-P bond.

It carries out the reaction [phosphate](n) + ATP = [phosphate](n+1) + ADP. In terms of biological role, catalyzes the reversible transfer of the terminal phosphate of ATP to form a long-chain polyphosphate (polyP). This Acinetobacter baumannii (strain ATCC 17978 / DSM 105126 / CIP 53.77 / LMG 1025 / NCDC KC755 / 5377) protein is Polyphosphate kinase.